The following is a 429-amino-acid chain: Protein AST1 (429 aa).

As to quaternary structure, interacts with PMA1.

The protein resides in the cell membrane. It localises to the membrane raft. The protein localises to the golgi apparatus membrane. It is found in the late endosome membrane. Lipid raft-associated protein involved in the targeting of PMA1 from Golgi to the plasma membrane. May induce clustering of PMA1, which facilitates partition of PMA1 into lipid rafts after leaving the ER and its transport to the cell surface. This chain is Protein AST1, found in Saccharomyces cerevisiae (strain ATCC 204508 / S288c) (Baker's yeast).